Here is a 333-residue protein sequence, read N- to C-terminus: Protein-methionine-sulfoxide reductase catalytic subunit MsrP (333 aa).

The tat-type signal signal peptide spans 1–43; sequence MSKQRKLTEADVTPESVFYQRRKVLQALGITAASLALPHNAQA. Mo-molybdopterin-binding positions include asparagine 87, 90–91, cysteine 145, threonine 180, asparagine 232, arginine 237, and 248–250; these read YE and GIK.

The protein belongs to the MsrP family. Heterodimer of a catalytic subunit (MsrP) and a heme-binding subunit (MsrQ). The cofactor is Mo-molybdopterin. Predicted to be exported by the Tat system. The position of the signal peptide cleavage has not been experimentally proven.

It is found in the periplasm. It catalyses the reaction L-methionyl-[protein] + a quinone + H2O = L-methionyl-(S)-S-oxide-[protein] + a quinol. It carries out the reaction L-methionyl-[protein] + a quinone + H2O = L-methionyl-(R)-S-oxide-[protein] + a quinol. In terms of biological role, part of the MsrPQ system that repairs oxidized periplasmic proteins containing methionine sulfoxide residues (Met-O), using respiratory chain electrons. Thus protects these proteins from oxidative-stress damage caused by reactive species of oxygen and chlorine generated by the host defense mechanisms. MsrPQ is essential for the maintenance of envelope integrity under bleach stress, rescuing a wide series of structurally unrelated periplasmic proteins from methionine oxidation. The catalytic subunit MsrP is non-stereospecific, being able to reduce both (R-) and (S-) diastereoisomers of methionine sulfoxide. The sequence is that of Protein-methionine-sulfoxide reductase catalytic subunit MsrP from Serratia proteamaculans (strain 568).